The following is a 36-amino-acid chain: Photosystem I reaction center subunit VIII (36 aa).

A helical membrane pass occupies residues 9–29 (ISVPLVGLVFPAITMVLSFIY).

It belongs to the PsaI family.

Its subcellular location is the plastid. It is found in the chloroplast thylakoid membrane. May help in the organization of the PsaL subunit. The protein is Photosystem I reaction center subunit VIII of Huperzia lucidula (Shining clubmoss).